We begin with the raw amino-acid sequence, 153 residues long: Protein DpnD (153 aa).

The chain is Protein DpnD from Streptococcus pneumoniae serotype 4 (strain ATCC BAA-334 / TIGR4).